An 883-amino-acid polypeptide reads, in one-letter code: DNA double-strand break repair Rad50 ATPase (883 aa).

ATP is bound by residues K12, 32-38 (NGSGKSS), and Q137. Residues 244-283 (ERYEESRTALADVEETIADVREAVAEAERERETLADRVSD) are a coiled coil. Disordered stretches follow at residues 271–290 (ERER…RASD) and 305–326 (DDPD…REAV). A compositionally biased stretch (basic and acidic residues) spans 313–326 (SAERDAVADQREAV). Coiled-coil stretches lie at residues 336–389 (AVSR…IEAL) and 414–452 (LDDA…LDEG). The 100-residue stretch at 407 to 506 (FGAAEAFLDD…RVDRGESLVA (100 aa)) folds into the Zinc-hook domain. Zn(2+)-binding residues include C454 and C457. The tract at residues 508–565 (EDRVDDLEQQRERAVERRDEQADIADAKRDQAAEKRDRAADLDAEAEDARADAAAKRD) is disordered. Coiled coils occupy residues 571-604 (RETL…AADA) and 668-720 (KLQA…VTAL).

The protein belongs to the SMC family. RAD50 subfamily. Homodimer. Forms a heterotetramer composed of two Mre11 subunits and two Rad50 subunits. It depends on Zn(2+) as a cofactor.

Its function is as follows. Part of the Rad50/Mre11 complex, which is involved in the early steps of DNA double-strand break (DSB) repair. Rad50 controls the balance between DNA end bridging and DNA resection via ATP-dependent structural rearrangements of the Rad50/Mre11 complex. In Halobacterium salinarum (strain ATCC 700922 / JCM 11081 / NRC-1) (Halobacterium halobium), this protein is DNA double-strand break repair Rad50 ATPase.